We begin with the raw amino-acid sequence, 267 residues long: Potassium channel regulatory protein (267 aa).

The BTB domain occupies 5-74 (ELVTLNVGGK…LRTQQLLLPT (70 aa)).

Can form homooligomers. Interacts with KCNA1 (via cytoplasmic N-terminal domain) and KCNA4.

Its subcellular location is the endoplasmic reticulum. In terms of biological role, inhibits potassium fluxes in cells. May regulate Kv1 family channel proteins by retaining a fraction of channels in endomembranes. This chain is Potassium channel regulatory protein (KCNRG), found in Bos taurus (Bovine).